Here is a 264-residue protein sequence, read N- to C-terminus: 3-methyl-2-oxobutanoate hydroxymethyltransferase (264 aa).

Residues aspartate 45 and aspartate 84 each coordinate Mg(2+). Residues 45–46 (DS), aspartate 84, and lysine 112 contribute to the 3-methyl-2-oxobutanoate site. Glutamate 114 lines the Mg(2+) pocket. Residue glutamate 181 is the Proton acceptor of the active site.

Belongs to the PanB family. As to quaternary structure, homodecamer; pentamer of dimers. The cofactor is Mg(2+).

It is found in the cytoplasm. The catalysed reaction is 3-methyl-2-oxobutanoate + (6R)-5,10-methylene-5,6,7,8-tetrahydrofolate + H2O = 2-dehydropantoate + (6S)-5,6,7,8-tetrahydrofolate. It participates in cofactor biosynthesis; (R)-pantothenate biosynthesis; (R)-pantoate from 3-methyl-2-oxobutanoate: step 1/2. Its function is as follows. Catalyzes the reversible reaction in which hydroxymethyl group from 5,10-methylenetetrahydrofolate is transferred onto alpha-ketoisovalerate to form ketopantoate. In Shigella flexneri serotype 5b (strain 8401), this protein is 3-methyl-2-oxobutanoate hydroxymethyltransferase.